We begin with the raw amino-acid sequence, 277 residues long: Indole-3-glycerol phosphate synthase (277 aa).

This sequence belongs to the TrpC family.

The catalysed reaction is 1-(2-carboxyphenylamino)-1-deoxy-D-ribulose 5-phosphate + H(+) = (1S,2R)-1-C-(indol-3-yl)glycerol 3-phosphate + CO2 + H2O. Its pathway is amino-acid biosynthesis; L-tryptophan biosynthesis; L-tryptophan from chorismate: step 4/5. In Pseudomonas putida (Arthrobacter siderocapsulatus), this protein is Indole-3-glycerol phosphate synthase (trpC).